The sequence spans 218 residues: Kappa-scoloptoxin(11)-Ssd1b (218 aa).

Positions 1-16 are cleaved as a signal peptide; sequence MFYSHLLFFTFTFACS. Positions 17 to 25 are excised as a propeptide; that stretch reads SSLNRKTKR.

Contains 8 disulfide bonds. In terms of tissue distribution, expressed by the venom gland.

Its subcellular location is the secreted. Functionally, voltage-gated potassium channel inhibitor. The chain is Kappa-scoloptoxin(11)-Ssd1b from Scolopendra dehaani (Thai centipede).